Reading from the N-terminus, the 302-residue chain is MEPLISMGVLALIGVAATIAGASEDLESDIGSQSNPNSQVQLAPQMMFPHRIFNKAISGEPPSNALMCSIGAAVATVLISEFTMSPLFALVFGSLIAACVHATFAVTSTMGRCASQSRFKQPIYLDMIRSHITPIMGYAFITTFCILVVSYLMTVVLGHPFPLTMLAFIWGITIGAIGSSTGDVHYGAEREFQQFEFGSGLNASNSGNIVRYAESGLRDGFDNSWFCAKFGGPVTGLAFGMTVFLGSWITTIFDPAKGLGWLSVIAGIVIVFILIIWNWKMEVYARKAYGPYKEDKTEEASA.

A run of 6 helical transmembrane segments spans residues P3–S23, P86–V106, I132–L152, V155–G175, P233–F253, and L259–W279.

Belongs to the MtrE family. The complex is composed of 8 subunits; MtrA, MtrB, MtrC, MtrD, MtrE, MtrF, MtrG and MtrH.

Its subcellular location is the cell membrane. The enzyme catalyses 5-methyl-5,6,7,8-tetrahydromethanopterin + coenzyme M + 2 Na(+)(in) = 5,6,7,8-tetrahydromethanopterin + methyl-coenzyme M + 2 Na(+)(out). Its pathway is one-carbon metabolism; methanogenesis from CO(2); methyl-coenzyme M from 5,10-methylene-5,6,7,8-tetrahydromethanopterin: step 2/2. In terms of biological role, part of a complex that catalyzes the formation of methyl-coenzyme M and tetrahydromethanopterin from coenzyme M and methyl-tetrahydromethanopterin. This is an energy-conserving, sodium-ion translocating step. The protein is Tetrahydromethanopterin S-methyltransferase subunit E of Methanosarcina barkeri (strain Fusaro / DSM 804).